Reading from the N-terminus, the 848-residue chain is Nuclear cap-binding protein subunit 1 (848 aa).

The MIF4G domain occupies 8-228 (LLRIGEKGPE…DLLDRIQSLA (221 aa)). Residues 767 to 786 (EDDKPSAMDVDSENGNPKKS) form a disordered region.

It belongs to the NCBP1 family. In terms of assembly, component of the nuclear cap-binding complex (CBC), a heterodimer composed of ABH1/CBP80 and CBP20 that interacts with m7GpppG-capped RNA. In terms of tissue distribution, expressed in all tissues analyzed, including roots, stems, leaves and flowers.

It localises to the nucleus. The protein localises to the cytoplasm. Component of the cap-binding complex (CBC), which binds cotranscriptionally to the 5'-cap of pre-mRNAs and is involved in various processes such as pre-mRNA splicing and RNA-mediated gene silencing (RNAi) by microRNAs (miRNAs). The CBC complex is involved in miRNA-mediated RNA interference and is required for primary miRNA processing. In the CBC complex, ABH1/CBP80 does not bind directly capped RNAs (m7GpppG-capped RNA) but is required to stabilize the movement of the N-terminal loop of CBP20 and lock the CBC into a high affinity cap-binding state with the cap structure. Involved in flowering regulation, possibly by regulating pre-mRNA splicing of FLC gene. Acts as a negative regulator of abscisic acid signaling in guard cells. The chain is Nuclear cap-binding protein subunit 1 (ABH1) from Arabidopsis thaliana (Mouse-ear cress).